Reading from the N-terminus, the 150-residue chain is uncharacterized protein (150 aa).

This is an uncharacterized protein from Bacillus subtilis (strain 168).